Consider the following 97-residue polypeptide: Non-pathogenic pore-forming peptide amoebapore A (97 aa).

The first 20 residues, 1–20 (MKAIVFVLIFAVAFAVTLRQ), serve as a signal peptide directing secretion. One can recognise a Saposin B-type domain in the interval 21–97 (GPIVCNLCTG…NAICAKIHAC (77 aa)). Intrachain disulfides connect Cys-25-Cys-97, Cys-28-Cys-91, and Cys-55-Cys-66.

In terms of assembly, monomer. Homodimer. Hexamer; formed during insertion in the membrane.

It localises to the cytoplasmic granule. Forms pores in the cell membrane of host cells. Implicated in the cytolytic activity of the parasite. Pore forming activity is lower compared to the activity of ameobapore A from the pathogenic strain HM-1:IMSS. This Entamoeba histolytica protein is Non-pathogenic pore-forming peptide amoebapore A.